The primary structure comprises 502 residues: Probable malate:quinone oxidoreductase 1 (502 aa).

The protein belongs to the MQO family. FAD is required as a cofactor.

It catalyses the reaction (S)-malate + a quinone = a quinol + oxaloacetate. It participates in carbohydrate metabolism; tricarboxylic acid cycle; oxaloacetate from (S)-malate (quinone route): step 1/1. The chain is Probable malate:quinone oxidoreductase 1 from Pseudomonas putida (strain ATCC 47054 / DSM 6125 / CFBP 8728 / NCIMB 11950 / KT2440).